Here is a 321-residue protein sequence, read N- to C-terminus: MLGPQIWASMRQGLSRGLSRNVKGKKVDIAGIYPPVTTPFTATAEVDYGKLEENLNRLATFPFRGFVVQGSTGEFPFLTSLERLEVVSRVRQAIPKDKFLIAGSGCESTQATVEMTVSMAQVGADVAMVVTPCYYRGRMSSAALIHHYTKVADVSPIPVVLYSVPANTGLELPVDAVVTLSQHPNIIGLKDSGGDVTRIGLIVHKTSKQDFQVLAGSAGFLLASYAVGAVGGICGLANVLGAQVCQLERLCLTGQWEAAQELQHRLIEPNTAVTRRFGIPGLKKTMDWFGYYGGPCRAPLQELSPTEEEALRLDFSNNGWL.

Residues 1–23 constitute a mitochondrion transit peptide; the sequence is MLGPQIWASMRQGLSRGLSRNVK. 71–72 is a binding site for substrate; it reads ST. K190 (schiff-base intermediate with substrate) is an active-site residue. Substrate-binding residues include S192 and G216.

The protein belongs to the DapA family. As to quaternary structure, homotetramer.

Its subcellular location is the mitochondrion. The catalysed reaction is (4S)-4-hydroxy-2-oxoglutarate = glyoxylate + pyruvate. It carries out the reaction (4R)-4-hydroxy-2-oxoglutarate = glyoxylate + pyruvate. With respect to regulation, inhibited by divalent cations. In terms of biological role, catalyzes the final step in the metabolic pathway of hydroxyproline. This chain is 4-hydroxy-2-oxoglutarate aldolase, mitochondrial (Hoga1), found in Mus musculus (Mouse).